Reading from the N-terminus, the 806-residue chain is MSKLTTGSFSIEDLESVQITINNIVGAAKEAAEEKTKELGHMGPTPFPGLETYRDDWNLKLLDRYEPVVTPMCDQCCYCTYGPCDLSNNKRGACGIDMLGHNGREFFLRVITGTACHAAHGRHLLDHLIEVFGEELPLNLGQSDVLTPNITITTGQRPQTLGEIKPAMEHVEEQLTQLLATVHAGQESAEIDYDSKALFSGSLDHVGMEISDIVQIAALDFPKADPEAPLIEMGMGTIDKDKPFLCVIGHNVGGVTYMMDYMEEHELTDKVELGGLCCTAIDLTRYKEADRRPPYTKVVGSMSKELKIIRSGMPDVIVVDEQCVRGDIVPEAQKLKIPVIASNAKIMYGLPNRTDAGVEETIEELKSGAIPGAVILDYEKLGEISVRLAQEMHPIREAAGVREIPSDEQLKEWVDKCADCGACYLACPIELDIPEAMKFAKQGDFSYLEDLHDACIGCRRCEQVCKKEIPILSVIEKASQKIIAEEKGWMRAGRGQVSDAEIRAEGLNLVMGTTPGIIAIIGCPNYSDCAKAVYYIAEEFLKRNYIVVGTGCGSMDMGMYKDEDGKTLYERFPGGFQSGGLVNIGSCVSNAHITGAAQKVAGIFGGRTMEGNLAEIADYVLNRVGACGLAWGAFSQKASSIGTGCNIYGIPAVLGAHSSKYRRALIAKNYDESKWKVYDARNGEEMPIPPAPEFLLTTAETWQEAIPMMAKACLRPSDNSLGRSIKLTHWMELHDKYIGGLPEDWWKFIRTEADLPLAKRADLMKKLEAERGWEIDWKKKKIISGPKIKFDVSAQPTNLKRLCKGA.

The [4Fe-4S] cluster site is built by Cys73, Cys76, Cys77, Cys79, Cys84, and Cys94. His117 contacts CO. 3 residues coordinate [Ni-4Fe-4S] cluster: His250, Cys278, and Cys323. 4Fe-4S ferredoxin-type domains are found at residues 406 to 436 (SDEQ…IPEA) and 445 to 475 (FSYL…LSVI). Positions 417, 420, 423, 427, 455, 458, 461, and 465 each coordinate [4Fe-4S] cluster. [Ni-4Fe-4S] cluster contacts are provided by Cys523, Cys552, and Cys587.

The protein belongs to the Ni-containing carbon monoxide dehydrogenase family. As to quaternary structure, heterotetramer of two alpha and two epsilon subunits. The ACDS complex is made up of alpha, epsilon, beta, gamma and delta subunits with a probable stoichiometry of (alpha(2)epsilon(2))(4)-beta(8)-(gamma(1)delta(1))(8). Requires [4Fe-4S] cluster as cofactor. It depends on [Ni-4Fe-4S] cluster as a cofactor.

It carries out the reaction CO + 2 oxidized [2Fe-2S]-[ferredoxin] + H2O = 2 reduced [2Fe-2S]-[ferredoxin] + CO2 + 2 H(+). The protein operates within one-carbon metabolism; methanogenesis from acetate. Its function is as follows. Part of the ACDS complex that catalyzes the reversible cleavage of acetyl-CoA, allowing growth on acetate as sole source of carbon and energy. The alpha-epsilon subcomponent functions as a carbon monoxide dehydrogenase. The protein is Acetyl-CoA decarbonylase/synthase complex subunit alpha 1 of Methanosarcina mazei (strain ATCC BAA-159 / DSM 3647 / Goe1 / Go1 / JCM 11833 / OCM 88) (Methanosarcina frisia).